The following is a 96-amino-acid chain: Phosphoribosyl-ATP pyrophosphatase (96 aa).

Belongs to the PRA-PH family.

The protein localises to the cytoplasm. The catalysed reaction is 1-(5-phospho-beta-D-ribosyl)-ATP + H2O = 1-(5-phospho-beta-D-ribosyl)-5'-AMP + diphosphate + H(+). It functions in the pathway amino-acid biosynthesis; L-histidine biosynthesis; L-histidine from 5-phospho-alpha-D-ribose 1-diphosphate: step 2/9. In Methanococcus maripaludis (strain C5 / ATCC BAA-1333), this protein is Phosphoribosyl-ATP pyrophosphatase.